A 278-amino-acid chain; its full sequence is Large ribosomal subunit protein uL24m (278 aa).

The region spanning 109 to 142 (FFPGDLVQVMVGKDKGRQGLVLTTSRDSSDVIVD) is the KOW domain.

The protein belongs to the universal ribosomal protein uL24 family.

It localises to the mitochondrion. The chain is Large ribosomal subunit protein uL24m (mrpl-24) from Caenorhabditis elegans.